The primary structure comprises 130 residues: MFKIYRTSCMGQHQSQFLHSGTVVQTVDGVTTTSFFQPCLVFPFSIEIISISLVSLNTTNETKLIKMSIMENSELVDYNESAYTLAHLPGKQMTYLKYPAPFTIRQHQPFFFVHHGDLGDASLTLEYRIK.

This is an uncharacterized protein from Aedes vexans (Inland floodwater mosquito).